Consider the following 506-residue polypeptide: NAD(P)H-quinone oxidoreductase subunit 2, chloroplastic (506 aa).

13 helical membrane passes run 15-35 (LIPEGIVACTILLVLLLDLVY), 39-59 (CHAWLAWVAMAGLSLASVLLG), 84-104 (LSLVFRAIIAMSCVLCILLSI), 113-133 (APSEFLVLIATASLGGMLVAG), 137-157 (LLMMFVSLETLGLASYLLTGY), 172-192 (LLVGAASSGLFLYGISWMYGI), 217-237 (CALALVLMTVGVGFKVAAAPF), 249-269 (PTPVVAFLSVGSKAAGFILAV), 283-303 (WHLIFTILSILSMIVGNFIAV), 339-359 (IVYLLIYLFMNLGAFACVILF), 382-402 (ALCLSLCLLSLGGIPPLAGFF), 418-438 (SLVWVGLITSVVSIYYYLSVV), and 471-491 (VGIFVCVLGSILVGVAGNSMV).

This sequence belongs to the complex I subunit 2 family. As to quaternary structure, NDH is composed of at least 16 different subunits, 5 of which are encoded in the nucleus.

The protein resides in the plastid. Its subcellular location is the chloroplast thylakoid membrane. It catalyses the reaction a plastoquinone + NADH + (n+1) H(+)(in) = a plastoquinol + NAD(+) + n H(+)(out). It carries out the reaction a plastoquinone + NADPH + (n+1) H(+)(in) = a plastoquinol + NADP(+) + n H(+)(out). In terms of biological role, NDH shuttles electrons from NAD(P)H:plastoquinone, via FMN and iron-sulfur (Fe-S) centers, to quinones in the photosynthetic chain and possibly in a chloroplast respiratory chain. The immediate electron acceptor for the enzyme in this species is believed to be plastoquinone. Couples the redox reaction to proton translocation, and thus conserves the redox energy in a proton gradient. The protein is NAD(P)H-quinone oxidoreductase subunit 2, chloroplastic of Nephroselmis olivacea (Green alga).